The chain runs to 227 residues: Cytidylate kinase (227 aa).

12-20 lines the ATP pocket; it reads GPSGAGKGT.

Belongs to the cytidylate kinase family. Type 1 subfamily.

The protein localises to the cytoplasm. It catalyses the reaction CMP + ATP = CDP + ADP. It carries out the reaction dCMP + ATP = dCDP + ADP. This is Cytidylate kinase from Xanthomonas euvesicatoria pv. vesicatoria (strain 85-10) (Xanthomonas campestris pv. vesicatoria).